We begin with the raw amino-acid sequence, 384 residues long: Brix domain-containing protein F44G4.1 (384 aa).

Disordered regions lie at residues 1 to 58 (MAPK…KVVK) and 82 to 135 (SKAT…PQKE). The span at 18–48 (FVEEEVTGDVDEDGFEQAEDMPDEVDSDEDE) shows a compositional bias: acidic residues. Residues 96 to 114 (LPKSQRGKALKRALRKDKR) are compositionally biased toward basic residues. Positions 115–127 (ARQGERAQIRDEL) are enriched in basic and acidic residues. In terms of domain architecture, Brix spans 177–360 (PKVMITMTPK…LKWLQKGTFD (184 aa)).

The protein is Brix domain-containing protein F44G4.1 of Caenorhabditis elegans.